We begin with the raw amino-acid sequence, 177 residues long: Protein GrpE (177 aa).

Residues 1-26 form a disordered region; that stretch reads MSEEIKKDDLQEEVEATETEETVEEV. Positions 10 to 26 are enriched in acidic residues; it reads LQEEVEATETEETVEEV.

Belongs to the GrpE family. As to quaternary structure, homodimer.

The protein localises to the cytoplasm. Functionally, participates actively in the response to hyperosmotic and heat shock by preventing the aggregation of stress-denatured proteins, in association with DnaK and GrpE. It is the nucleotide exchange factor for DnaK and may function as a thermosensor. Unfolded proteins bind initially to DnaJ; upon interaction with the DnaJ-bound protein, DnaK hydrolyzes its bound ATP, resulting in the formation of a stable complex. GrpE releases ADP from DnaK; ATP binding to DnaK triggers the release of the substrate protein, thus completing the reaction cycle. Several rounds of ATP-dependent interactions between DnaJ, DnaK and GrpE are required for fully efficient folding. The protein is Protein GrpE of Streptococcus agalactiae serotype Ia (strain ATCC 27591 / A909 / CDC SS700).